The sequence spans 1026 residues: MRFFALFIYRPVATILIAAAITLCGILGFRLLPVAPLPQVDFPVIMVSASLPGASPETMASSVATPLERSLGRIAGVNEMTSSSSLGSTRIILEFNFDRDINGAARDVQAAINAAQSLLPGGMPSRPTYRKANPSDAPIMILTLTSESWSQGKLYDFASTQLAQTIAQIDGVGDVDVGGSSLPAVRVGLNPQALFNQGVSLDEVREAIDSANVRRPQGAIEDSVHRWQIQTNDELKTAAEYQPLIIHYNNGAAVRLGDVASVTDSVQDVRNAGMTNAKPAILLMIRKLPEANIIQTVDGIRAKLPELRAMIPAAIDLQIAQDRSPTIRASLQEVEETLAISVALVIMVVFLFLRSGRATLIPAVAVPVSLIGTFAAMYLCGFSLNNLSLMALTIATGFVVDDAIVVLENIARHLEAGMKPLQAALQGTREVGFTVISMSLSLVAVFLPLLLMGGLPGRLLREFAVTLSVAIGISLVVSLTLTPMMCGWMLKSSKPRTQPRKRGVGRLLVALQQGYGTSLKWVLNHTRLVGVVFLGTVALNIWLYIAIPKTFFPEQDTGVLMGGIQADQSISFQAMRGKLQDFMKIIRDDPAVNNVTGFTGGSRVNSGMMFITLKPRGERKETAQQIIDRLRVKLAKEPGARLFLMAVQDIRVGGRQANASYQYTLLSDSLAALREWEPKIRKALSALPQLADVNSDQQDNGAEMNLIYDRDTMSRLGIDVQAANSLLNNAFGQRQISTIYQPMNQYKVVMEVDPRYSQDISALEKMFVINRDGKAIPLSYFAQWRPANAPLSVNHQGLSAASTIAFNLPTGTSLSQATEAINRTMTQLGVPPTVRGSFSGTAQVFQQTMNSQLILIVAAIATVYIVLGILYESYVHPLTILSTLPSAGVGALLALELFNAPFSLIALIGIMLLIGIVKKNAIMMVDFALEAQRSGGLTPAQAIFQACLLRFRPIMMTTLAALFGALPLVLSGGDGSELRQPLGITIVGGLVMSQLLTLYTTPVVYLFFDRLRLRFSRKNSKPVVEI.

11 helical membrane passes run 15-35, 333-353, 360-380, 387-407, 431-451, 463-483, 528-548, 853-873, 897-917, 953-973, and 984-1004; these read ILIA…LPVA, EVEE…FLFL, LIPA…MYLC, LSLM…IVVL, VGFT…PLLL, FAVT…TLTP, LVGV…IAIP, LILI…LYES, LFNA…IGIV, PIMM…LSGG, and ITIV…TPVV.

Belongs to the resistance-nodulation-cell division (RND) (TC 2.A.6) family. MdtC subfamily. As to quaternary structure, part of a tripartite efflux system composed of MdtA, MdtB and MdtC. MdtC forms a heteromultimer with MdtB.

It is found in the cell inner membrane. This is Multidrug resistance protein MdtC from Salmonella choleraesuis (strain SC-B67).